A 670-amino-acid polypeptide reads, in one-letter code: Alpha-1,4-glucan:maltose-1-phosphate maltosyltransferase (670 aa).

Alpha-maltose 1-phosphate is bound by residues Lys262, Gln322, and Asp357. The Nucleophile role is filled by Asp393. Asn394 contributes to the alpha-maltose 1-phosphate binding site. The active-site Proton donor is the Glu422. Lys534–Tyr535 provides a ligand contact to alpha-maltose 1-phosphate.

This sequence belongs to the glycosyl hydrolase 13 family. GlgE subfamily. As to quaternary structure, homodimer.

It carries out the reaction alpha-maltose 1-phosphate + [(1-&gt;4)-alpha-D-glucosyl](n) = [(1-&gt;4)-alpha-D-glucosyl](n+2) + phosphate. Maltosyltransferase that uses maltose 1-phosphate (M1P) as the sugar donor to elongate linear or branched alpha-(1-&gt;4)-glucans. Is involved in a branched alpha-glucan biosynthetic pathway from trehalose, together with TreS, Mak and GlgB. The chain is Alpha-1,4-glucan:maltose-1-phosphate maltosyltransferase from Chlorobaculum tepidum (strain ATCC 49652 / DSM 12025 / NBRC 103806 / TLS) (Chlorobium tepidum).